The chain runs to 260 residues: Isoprenyl transferase (260 aa).

D40 is a catalytic residue. D40 is a Mg(2+) binding site. Substrate contacts are provided by residues 41-44, W45, R53, H57, and 85-87; these read GNGR and STE. Residue N88 is the Proton acceptor of the active site. Residues W89, R91, R208, and 214–216 each bind substrate; that span reads RLS. E227 serves as a coordination point for Mg(2+).

Belongs to the UPP synthase family. As to quaternary structure, homodimer. Requires Mg(2+) as cofactor.

Its function is as follows. Catalyzes the condensation of isopentenyl diphosphate (IPP) with allylic pyrophosphates generating different type of terpenoids. The protein is Isoprenyl transferase of Bacillus subtilis (strain 168).